Reading from the N-terminus, the 212-residue chain is uncharacterized protein (212 aa).

Residues G53, E74, and D97 each coordinate S-adenosyl-L-methionine.

It belongs to the methyltransferase superfamily. YrrT family.

In terms of biological role, could be a S-adenosyl-L-methionine-dependent methyltransferase. This is an uncharacterized protein from Bacillus cereus (strain ZK / E33L).